A 412-amino-acid chain; its full sequence is Serine hydroxymethyltransferase (412 aa).

Residues Leu-112 and 116–118 contribute to the (6S)-5,6,7,8-tetrahydrofolate site; that span reads GHL. Lys-221 carries the N6-(pyridoxal phosphate)lysine modification. (6S)-5,6,7,8-tetrahydrofolate is bound at residue Glu-237.

It belongs to the SHMT family. As to quaternary structure, homodimer. Requires pyridoxal 5'-phosphate as cofactor.

It localises to the cytoplasm. The catalysed reaction is (6R)-5,10-methylene-5,6,7,8-tetrahydrofolate + glycine + H2O = (6S)-5,6,7,8-tetrahydrofolate + L-serine. The protein operates within one-carbon metabolism; tetrahydrofolate interconversion. It functions in the pathway amino-acid biosynthesis; glycine biosynthesis; glycine from L-serine: step 1/1. Its function is as follows. Catalyzes the reversible interconversion of serine and glycine with tetrahydrofolate (THF) serving as the one-carbon carrier. This reaction serves as the major source of one-carbon groups required for the biosynthesis of purines, thymidylate, methionine, and other important biomolecules. Also exhibits THF-independent aldolase activity toward beta-hydroxyamino acids, producing glycine and aldehydes, via a retro-aldol mechanism. This is Serine hydroxymethyltransferase from Malacoplasma penetrans (strain HF-2) (Mycoplasma penetrans).